The following is a 447-amino-acid chain: Serine/threonine-protein phosphatase 2A 55 kDa regulatory subunit B delta isoform (447 aa).

WD repeat units lie at residues 26–65 (AEAD…KSRP), 91–132 (EIEE…KRVE), 175–213 (AHTY…RSFN), 224–264 (ELTE…LCDR), 283–321 (EIIS…RPVE), 338–379 (ENDC…DITL), and 414–447 (DFNK…DKVN).

This sequence belongs to the phosphatase 2A regulatory subunit B family. PP2A consists of a common heterodimeric core enzyme, composed of a 36 kDa catalytic subunit (subunit C) and a 65 kDa constant regulatory subunit (PR65 or subunit A), that associates with a variety of regulatory subunits. Proteins that associate with the core dimer include three families of regulatory subunits B (the R2/B/PR55/B55, R3/B''/PR72/PR130/PR59 and R5/B'/B56 families), the 48 kDa variable regulatory subunit, viral proteins, and cell signaling molecules. Interacts with ensa (when phosphorylated at 'Ser-67') and arpp19 (when phosphorylated at 'Ser-67'), leading to inhibit PP2A activity.

It is found in the cytoplasm. Substrate-recognition subunit of protein phosphatase 2A (PP2A) that plays a key role in cell cycle by controlling mitosis entry and exit. The activity of PP2A complexes containing ppp2r2d (PR55-delta) fluctuate during the cell cycle: the activity is high in interphase and low in mitosis. During mitosis, activity of PP2A is inhibited via interaction with phosphorylated ensa and arpp19 inhibitors. PP2A complexes containing ppp2r2d (PR55-delta) also regulate the activity of TGF-beta/Activin/Nodal signaling by restricting receptor activity. Within the PP2A complexes, the B regulatory subunits modulate substrate selectivity and catalytic activity, and may also direct the localization of the catalytic enzyme to a particular subcellular compartment. In Xenopus tropicalis (Western clawed frog), this protein is Serine/threonine-protein phosphatase 2A 55 kDa regulatory subunit B delta isoform (ppp2r2d).